A 161-amino-acid polypeptide reads, in one-letter code: Nucleotide-binding protein BceJ2315_27070 (161 aa).

This sequence belongs to the YajQ family.

Functionally, nucleotide-binding protein. The protein is Nucleotide-binding protein BceJ2315_27070 of Burkholderia cenocepacia (strain ATCC BAA-245 / DSM 16553 / LMG 16656 / NCTC 13227 / J2315 / CF5610) (Burkholderia cepacia (strain J2315)).